The chain runs to 75 residues: uncharacterized protein (75 aa).

This is an uncharacterized protein from Mycobacterium tuberculosis (strain CDC 1551 / Oshkosh).